The following is a 304-amino-acid chain: Lipoprotein signal peptidase (304 aa).

The next 3 membrane-spanning stretches (helical) occupy residues 28-48 (IKIKYPILAVMGFFVLLIVFV), 86-106 (PAVPYLLQSLLTIIFLITFIF), and 112-132 (LIVLLPLITFGGLANVIDRSV). Catalysis depends on residues Asp148 and Asp163. A helical transmembrane segment spans residues 163 to 183 (DICIVTGFALIFLTFVVDIFL).

Belongs to the peptidase A8 family.

The protein resides in the cell membrane. The enzyme catalyses Release of signal peptides from bacterial membrane prolipoproteins. Hydrolyzes -Xaa-Yaa-Zaa-|-(S,diacylglyceryl)Cys-, in which Xaa is hydrophobic (preferably Leu), and Yaa (Ala or Ser) and Zaa (Gly or Ala) have small, neutral side chains.. It functions in the pathway protein modification; lipoprotein biosynthesis (signal peptide cleavage). Its function is as follows. This protein specifically catalyzes the removal of signal peptides from prolipoproteins. The chain is Lipoprotein signal peptidase from Mycoplasmoides gallisepticum (strain R(low / passage 15 / clone 2)) (Mycoplasma gallisepticum).